The sequence spans 210 residues: Frataxin, mitochondrial (210 aa).

A mitochondrion-targeting transit peptide spans 1 to 41 (MWTLGRRAVAGLLASPSPAQAQTLTRVPRPAELAPLCGRRG).

It belongs to the frataxin family. Component of the mitochondrial core iron-sulfur cluster (ISC) complex composed of NFS1, LYRM4, NDUFAB1, ISCU, FXN, and FDX2; this complex is a heterohexamer containing two copies of each monomer. Homodimer. Monomer (probable predominant form). Oligomer. Monomers and polymeric aggregates of &gt;1 MDa have been isolated from mitochondria. A small fraction of heterologous overexpressed recombinant frataxin forms high-molecular weight aggregates that incorporate iron. Interacts with LYRM4. Interacts (via ferrous form) with ISCU; the interaction is possible when both are bound to the dimeric form of the cysteine desulfurase complex (NFS1:LYRM4) and the interaction enhances FXN interaction to the dimeric form of the cysteine desulfurase complex (NFS1:LYRM4). Interacts with FECH; one iron-bound FXN monomer seems to interact with a FECH homodimer. Interacts with SDHA and SDHB. Interacts with ACO2; the interaction is dependent on citrate. Interacts with HSPA9. As to quaternary structure, interacts with ACO1. Interacts with ISCU (cytoplasmic form). Processed in two steps by mitochondrial processing peptidase (MPP). MPP first cleaves the precursor to intermediate form and subsequently converts the intermediate to yield frataxin mature form (frataxin(81-210)) which is the predominant form. The additional forms, frataxin(56-210) and frataxin(78-210), seem to be produced when the normal maturation process is impaired; their physiological relevance is unsure. In terms of tissue distribution, expressed in the heart, peripheral blood lymphocytes and dermal fibroblasts.

The protein localises to the mitochondrion. The protein resides in the cytoplasm. It localises to the cytosol. The enzyme catalyses 4 Fe(2+) + O2 + 4 H(+) = 4 Fe(3+) + 2 H2O. Its function is as follows. Functions as an activator of persulfide transfer to the scaffoding protein ISCU as component of the core iron-sulfur cluster (ISC) assembly complex and participates to the [2Fe-2S] cluster assembly. Accelerates sulfur transfer from NFS1 persulfide intermediate to ISCU and to small thiols such as L-cysteine and glutathione leading to persulfuration of these thiols and ultimately sulfide release. Binds ferrous ion and is released from FXN upon the addition of both L-cysteine and reduced FDX2 during [2Fe-2S] cluster assembly. The core iron-sulfur cluster (ISC) assembly complex is involved in the de novo synthesis of a [2Fe-2S] cluster, the first step of the mitochondrial iron-sulfur protein biogenesis. This process is initiated by the cysteine desulfurase complex (NFS1:LYRM4:NDUFAB1) that produces persulfide which is delivered on the scaffold protein ISCU in a FXN-dependent manner. Then this complex is stabilized by FDX2 which provides reducing equivalents to accomplish the [2Fe-2S] cluster assembly. Finally, the [2Fe-2S] cluster is transferred from ISCU to chaperone proteins, including HSCB, HSPA9 and GLRX5. May play a role in the protection against iron-catalyzed oxidative stress through its ability to catalyze the oxidation of Fe(2+) to Fe(3+); the oligomeric form but not the monomeric form has in vitro ferroxidase activity. May be able to store large amounts of iron in the form of a ferrihydrite mineral by oligomerization; however, the physiological relevance is unsure as reports are conflicting and the function has only been shown using heterologous overexpression systems. May function as an iron chaperone protein that protects the aconitase [4Fe-4S]2+ cluster from disassembly and promotes enzyme reactivation. May play a role as a high affinity iron binding partner for FECH that is capable of both delivering iron to ferrochelatase and mediating the terminal step in mitochondrial heme biosynthesis. Functionally, modulates the RNA-binding activity of ACO1. May be involved in the cytoplasmic iron-sulfur protein biogenesis. May contribute to oxidative stress resistance and overall cell survival. This is Frataxin, mitochondrial from Homo sapiens (Human).